Here is an 857-residue protein sequence, read N- to C-terminus: Envelope glycoprotein B (857 aa).

Residues 1–21 (MTRRRVLSVVVLLAALACRLG) form the signal peptide. At 22–732 (AQTPEQPAPP…SGFISFFKNP (711 aa)) the chain is on the virion surface side. Disulfide bonds link Cys51–Cys528, Cys68–Cys484, Cys141–Cys206, Cys295–Cys342, and Cys551–Cys588. An N-linked (GlcNAc...) asparagine; by host glycan is attached at Asn76. The involved in fusion and/or binding to host membrane stretch occupies residues 108-114 (IYNGWYA). Asn163 is a glycosylation site (N-linked (GlcNAc...) asparagine; by host). Positions 192 to 200 (GWLIWTYRT) are involved in fusion and/or binding to host membrane. N-linked (GlcNAc...) asparagine; by host glycans are attached at residues Asn290, Asn329, Asn348, and Asn395. Residues 398–452 (ELTTPTSSPPSSPSPPAPPAARGSTSAAVLRRRRRDAGNATTPVPPAAPGKSLGT) are disordered. A compositionally biased stretch (pro residues) spans 404–416 (SSPPSSPSPPAPP). N-linked (GlcNAc...) asparagine; by host glycosylation is found at Asn436, Asn563, and Asn629. Hydrophobic membrane proximal region stretches follow at residues 678-730 (LDNA…SFFK) and 709-729 (NLVS…ISFF). A helical membrane pass occupies residues 733 to 753 (FGGMLILVLVAGVVILVISLT). At 754 to 857 (RRTRQMSQQP…ALLGEAETEF (104 aa)) the chain is on the intravirion side. The interval 832-857 (FPGLRRRRYHDPETAAALLGEAETEF) is disordered. Low complexity predominate over residues 845–857 (TAAALLGEAETEF).

This sequence belongs to the herpesviridae glycoprotein B family. In terms of assembly, homotrimer; disulfide-linked. Binds to heparan sulfate proteoglycans. Interacts with gH/gL heterodimer. Post-translationally, a proteolytic cleavage by host furin generates two subunits that remain linked by disulfide bonds.

The protein localises to the virion membrane. The protein resides in the host cell membrane. It localises to the host endosome membrane. It is found in the host Golgi apparatus membrane. In terms of biological role, envelope glycoprotein that forms spikes at the surface of virion envelope. Essential for the initial attachment to heparan sulfate moieties of the host cell surface proteoglycans. Involved in fusion of viral and cellular membranes leading to virus entry into the host cell. Following initial binding to its host receptors, membrane fusion is mediated by the fusion machinery composed at least of gB and the heterodimer gH/gL. May be involved in the fusion between the virion envelope and the outer nuclear membrane during virion egress. The chain is Envelope glycoprotein B from Epstein-Barr virus (strain GD1) (HHV-4).